The sequence spans 121 residues: Putative iron-sulfur cluster insertion protein ErpA (121 aa).

Iron-sulfur cluster is bound by residues Cys49, Cys113, and Cys115.

It belongs to the HesB/IscA family. As to quaternary structure, homodimer. The cofactor is iron-sulfur cluster.

Its function is as follows. Required for insertion of 4Fe-4S clusters. This Nitrosomonas eutropha (strain DSM 101675 / C91 / Nm57) protein is Putative iron-sulfur cluster insertion protein ErpA.